Reading from the N-terminus, the 239-residue chain is Transcriptional regulatory protein BtsR (239 aa).

In terms of domain architecture, Response regulatory spans 3-116 (KVLIVDDEPL…RLEKTLHRLR (114 aa)). D54 carries the post-translational modification 4-aspartylphosphate. The HTH LytTR-type domain maps to 137-239 (IPCTGHSRIY…LKSLKEAIGL (103 aa)).

Phosphorylated by BtsS.

Functionally, member of the two-component regulatory system BtsS/BtsR. BtsR regulates expression of btsT by binding to its promoter region. This is Transcriptional regulatory protein BtsR from Salmonella typhimurium (strain LT2 / SGSC1412 / ATCC 700720).